Reading from the N-terminus, the 378-residue chain is Interleukin-3 receptor subunit alpha (378 aa).

The first 18 residues, Met-1–Gln-18, serve as a signal peptide directing secretion. The Extracellular segment spans residues Thr-19–Arg-305. N-linked (GlcNAc...) asparagine glycosylation is found at Asn-46, Asn-64, Asn-80, and Asn-109. 4 cysteine pairs are disulfide-bonded: Cys-52/Cys-68, Cys-76/Cys-195, Cys-112/Cys-122, and Cys-151/Cys-165. Asn-212 and Asn-218 each carry an N-linked (GlcNAc...) asparagine glycan. Residues Cys-217 and Cys-293 are joined by a disulfide bond. The short motif at Leu-282–Ser-286 is the WSXWS motif element. The chain crosses the membrane as a helical span at residues Thr-306–Cys-325. Residues Arg-326–Thr-378 are Cytoplasmic-facing. The Box 1 motif signature appears at Leu-334–Lys-342.

This sequence belongs to the type I cytokine receptor family. Type 5 subfamily. As to quaternary structure, interacts with IL3. Heterodimer of an alpha and a beta subunit. The beta subunit is common to the IL3, IL5 and GM-CSF receptors. In terms of processing, ubiquitinated by RNFT2 in response to IL3. Ubiquitination leads ligand-induced degradation by the proteasome. Ubiquitinated by RNF128 via 'Lys-27'-linked polyubiquitination, facilitating its degradation through the lysosomal pathway.

It localises to the cell membrane. In terms of biological role, cell surface receptor for IL3 expressed on hematopoietic progenitor cells, monocytes and B-lymphocytes that controls the production and differentiation of hematopoietic progenitor cells into lineage-restricted cells. Ligand stimulation rapidly induces hetrodimerization with IL3RB, phosphorylation and enzyme activity of effector proteins such as JAK2 and PI3K that play a role in signaling cell proliferation and differentiation. Activation of JAK2 leads to STAT5-mediated transcriptional program. This is Interleukin-3 receptor subunit alpha from Homo sapiens (Human).